We begin with the raw amino-acid sequence, 248 residues long: MNQVLTETRPIRLKGRSFLAMVLSPELPLDGWLERLDDLARRSSGFFLGRPVVLDMENLAIERAQLVYLLQALNDRGVWIMGVEGARPSLLGPGMPPAMRGGQPAADFEAPAGEPQANPGAPEPQISQAVRAPGHAVHAMPSMVITEPVRSGQSVYFPEGDVTIVGSVASGAEVVAGGSIHIYGTLRGRALAGTAGNTSARIFCRKLEAELVAIDGLYKTAEDLEPRFRGQAVQLWLDGDYMMIDTLS.

The disordered stretch occupies residues 94–125 (GMPPAMRGGQPAADFEAPAGEPQANPGAPEPQ).

Belongs to the MinC family. As to quaternary structure, interacts with MinD and FtsZ.

Functionally, cell division inhibitor that blocks the formation of polar Z ring septums. Rapidly oscillates between the poles of the cell to destabilize FtsZ filaments that have formed before they mature into polar Z rings. Prevents FtsZ polymerization. The sequence is that of Probable septum site-determining protein MinC from Brucella abortus (strain S19).